Here is a 165-residue protein sequence, read N- to C-terminus: Large ribosomal subunit protein uL10 (165 aa).

It belongs to the universal ribosomal protein uL10 family. In terms of assembly, part of the ribosomal stalk of the 50S ribosomal subunit. The N-terminus interacts with L11 and the large rRNA to form the base of the stalk. The C-terminus forms an elongated spine to which L12 dimers bind in a sequential fashion forming a multimeric L10(L12)X complex.

In terms of biological role, forms part of the ribosomal stalk, playing a central role in the interaction of the ribosome with GTP-bound translation factors. The polypeptide is Large ribosomal subunit protein uL10 (Mycoplasma mycoides subsp. mycoides SC (strain CCUG 32753 / NCTC 10114 / PG1)).